The primary structure comprises 479 residues: Solute carrier family 46 member 2 (479 aa).

Over 1 to 23 the chain is Cytoplasmic; the sequence is MGPGGTCPWSSRLSGFRVRTWIE. Residues 24–44 form a helical membrane-spanning segment; it reads PVVASTQVAGSLYDAGLLLVV. The Extracellular portion of the chain corresponds to 45–80; sequence KESFKSEAGGSSNYSANQSLVEYQEDQQQKAISNFN. N-linked (GlcNAc...) asparagine glycans are attached at residues Asn-57 and Asn-61. A helical transmembrane segment spans residues 81–101; it reads IIYNLVLGLTPLLSAYGLGWL. At 102-110 the chain is on the cytoplasmic side; that stretch reads SDRYHRKIS. The helical transmembrane segment at 111–131 threads the bilayer; sequence ICTAMLGFLLSRIGLLLKVML. Over 132–140 the chain is Extracellular; the sequence is DWPVEVMYG. The chain crosses the membrane as a helical span at residues 141–161; sequence AAALNGLCGSFSAYWSGVMAL. Residues 162 to 174 are Cytoplasmic-facing; sequence GSLGCSEGRRSVR. Residues 175–195 form a helical membrane-spanning segment; it reads LILIDLVLGLAGFSGSMASGH. Topologically, residues 196–207 are extracellular; sequence LFKQIVGHSAQG. The chain crosses the membrane as a helical span at residues 208 to 228; it reads LLLTACSVGCAAFALFYSLFV. The Cytoplasmic segment spans residues 229-281; that stretch reads LKVPESKPNKVHPTVDTVSGMMGTYRTLDPDQQDKQNVPRNPRTPGKGKSSQR. The segment at 255-277 is disordered; the sequence is TLDPDQQDKQNVPRNPRTPGKGK. Residues 282–302 form a helical membrane-spanning segment; the sequence is EVVALLFVGAIIYDLAAVGTV. Over 303 to 321 the chain is Extracellular; the sequence is DVMALFVLKEPLHWNQVQL. Residues 322–342 form a helical membrane-spanning segment; sequence GYGMASGYIIFITSFLGVLVF. Residues 343 to 348 lie on the Cytoplasmic side of the membrane; the sequence is SRCFRD. The helical transmembrane segment at 349–369 threads the bilayer; the sequence is TTMIIIGMLSFGSGALLLAFV. Residues 370–371 are Extracellular-facing; sequence KE. A helical transmembrane segment spans residues 372 to 392; that stretch reads TYMFYIARAIMLFALIPITTI. The Cytoplasmic portion of the chain corresponds to 393 to 407; that stretch reads RSAMSKLIKDSSYGK. A helical membrane pass occupies residues 408-428; the sequence is IFVILQLCLTLTGVVTSTIYN. Residues 429–441 are Extracellular-facing; that stretch reads KIYQLTLDKFIGT. A helical membrane pass occupies residues 442–462; it reads CFVLSSFLSFLAIVPIGVVAY. Residues 463 to 479 lie on the Cytoplasmic side of the membrane; that stretch reads KQVPRSQQGECAEKQRS.

It belongs to the major facilitator superfamily. SLC46A family. Post-translationally, glycosylated. Expressed on cortical epithelial cells in the thymus. Mainly expressed in the thymic cortex and is highly enriched in SCID thymus. Also expressed in lymph nodes, heart, fetal liver, brain, spleen, intestine and kidney, but not in adult liver, skin, skeletal muscle and lung. Expressed in skin epidermis.

The protein localises to the endosome membrane. Its subcellular location is the cell membrane. The enzyme catalyses N-acetyl-beta-D-glucosaminyl-(1-&gt;4)-1,6-anhydro-N-acetyl-beta-D-muramoyl-L-alanyl-gamma-D-glutamyl-meso-2,6-diaminopimeloyl-D-alanine(out) + n H(+)(out) = N-acetyl-beta-D-glucosaminyl-(1-&gt;4)-1,6-anhydro-N-acetyl-beta-D-muramoyl-L-alanyl-gamma-D-glutamyl-meso-2,6-diaminopimeloyl-D-alanine(in) + n H(+)(in). The catalysed reaction is L-alanyl-gamma-D-glutamyl-meso-2,6-diaminopimelate(out) + n H(+)(out) = L-alanyl-gamma-D-glutamyl-meso-2,6-diaminopimelate(in) + n H(+)(in). It carries out the reaction N-acetyl-D-muramoyl-L-alanyl-D-isoglutamine(out) + n H(+)(out) = N-acetyl-D-muramoyl-L-alanyl-D-isoglutamine(in) + n H(+)(in). It catalyses the reaction 2',3'-cGAMP(out) + n H(+)(out) = 2',3'-cGAMP(in) + n H(+)(in). The enzyme catalyses 3',3'-cGAMP(out) + n H(+)(out) = 3',3'-cGAMP(in) + n H(+)(in). Down-regulated by the anti-inflammatory drug methotrexate. Proton-coupled transporter that delivers pathogen-associated or danger-associated molecular patterns to cytosolic pattern recognition receptors as part of the innate immune response to microbes or tissue injury. Has selectivity toward muropeptides that contain the amino acid diaminopimelic acid (DAP-type peptidoglycan muropeptides) including Tri-DAP and tracheal toxin (TCT), common in Gram-negative bacteria and Gram-positive bacilli. In the context of immune recognition of skin microbiota, shuttles bacterial muropeptides across the endolysosomal membranes into the cytosol for recognition by NOD1, triggering MYD88-dependent secretion of IL1A and neutrophil recruitment in a pyroptosis-type inflammatory process. To a lesser extent and redundantly, transports muramyl dipeptides derived from most bacterial proteoglycans, eliciting NOD2 receptor activation and downstream inflammatory responses. Postulated to function as an importer of cyclic GMP-AMP dinucleotides (cGAMPs) in monocyte and macrophage cell lineages. Selectively imports cGAMPs derived from pathogenic bacteria such as 3'3'-cGAMP thus providing for differential immune recognition of pathogenic versus commensal bacteria. During tumorigenesis may transport extracellular tumor-derived 2'3'-cGAMP across the plasma membrane of M1-polarized macrophages to activate the anti-tumoral stimulator of interferon genes (STING) pathway. The transport mechanism, its electrogenicity and stoichiometry remain to be elucidated. The chain is Solute carrier family 46 member 2 from Mus musculus (Mouse).